A 248-amino-acid chain; its full sequence is Adenosylcobinamide-GDP ribazoletransferase (248 aa).

The next 7 membrane-spanning stretches (helical) occupy residues 24–44 (EINL…IGAW), 70–90 (VIIT…GLFS), 106–126 (VGAN…ALFL), 134–154 (ICWL…LLFA), 168–188 (IFLG…LAVL), 189–209 (GLFF…FTII), and 228–248 (AGGQ…WGLV).

Belongs to the CobS family. Mg(2+) serves as cofactor.

Its subcellular location is the cell membrane. The catalysed reaction is alpha-ribazole + adenosylcob(III)inamide-GDP = adenosylcob(III)alamin + GMP + H(+). It catalyses the reaction alpha-ribazole 5'-phosphate + adenosylcob(III)inamide-GDP = adenosylcob(III)alamin 5'-phosphate + GMP + H(+). Its pathway is cofactor biosynthesis; adenosylcobalamin biosynthesis; adenosylcobalamin from cob(II)yrinate a,c-diamide: step 7/7. Joins adenosylcobinamide-GDP and alpha-ribazole to generate adenosylcobalamin (Ado-cobalamin). Also synthesizes adenosylcobalamin 5'-phosphate from adenosylcobinamide-GDP and alpha-ribazole 5'-phosphate. The sequence is that of Adenosylcobinamide-GDP ribazoletransferase from Listeria monocytogenes serovar 1/2a (strain ATCC BAA-679 / EGD-e).